We begin with the raw amino-acid sequence, 478 residues long: Alpha-1,3-mannosyl-glycoprotein 4-beta-N-acetylglucosaminyltransferase C (478 aa).

At 1–23 (MFKFHQVKHIFEILDKMRCLRKR) the chain is on the cytoplasmic side. Residues 24–44 (FTVSFLGVLVIFLLFMNLYIE) form a helical; Signal-anchor for type II membrane protein membrane-spanning segment. Residues 45–478 (DSYVLEGDKQ…IIRSISIWTS (434 aa)) lie on the Lumenal side of the membrane. Residues N84, N215, and N348 are each glycosylated (N-linked (GlcNAc...) asparagine).

The protein belongs to the glycosyltransferase 54 family. A divalent metal cation is required as a cofactor.

It localises to the golgi apparatus membrane. It catalyses the reaction N(4)-{beta-D-GlcNAc-(1-&gt;2)-alpha-D-Man-(1-&gt;3)-[beta-D-GlcNAc-(1-&gt;2)-alpha-D-Man-(1-&gt;6)]-beta-D-Man-(1-&gt;4)-beta-D-GlcNAc-(1-&gt;4)-beta-D-GlcNAc}-L-asparaginyl-[protein] + UDP-N-acetyl-alpha-D-glucosamine = N(4)-{beta-D-GlcNAc-(1-&gt;2)-[beta-D-GlcNAc-(1-&gt;4)]-alpha-D-Man-(1-&gt;3)-[beta-D-GlcNAc-(1-&gt;2)-alpha-D-Man-(1-&gt;6)]-beta-D-Man-(1-&gt;4)-beta-D-GlcNAc-(1-&gt;4)-beta-D-GlcNAc}-L-asparaginyl-[protein] + UDP + H(+). The protein operates within protein modification; protein glycosylation. In terms of biological role, glycosyltransferase that participates in the transfer of N-acetylglucosamine (GlcNAc) to the core mannose residues of N-linked glycans. Catalyzes the formation of the GlcNAcbeta1-4 branch on the GlcNAcbeta1-2Manalpha1-3 arm of the core structure of N-linked glycans. Essential for the production of tri- and tetra-antennary N-linked sugar chains. Does not catalyze the transfer of GlcNAc to the Manalpha1-6 arm to form GlcNAcBeta1-4Manalpha1-6 linkage ('GnT-VI' activity). The polypeptide is Alpha-1,3-mannosyl-glycoprotein 4-beta-N-acetylglucosaminyltransferase C (MGAT4C) (Sus scrofa (Pig)).